The following is a 146-amino-acid chain: Large ribosomal subunit protein mL41 (146 aa).

The transit peptide at 1 to 16 (MKGSPISQFSKTSINA) directs the protein to the mitochondrion.

Belongs to the mitochondrion-specific ribosomal protein mL41 family. As to quaternary structure, component of the mitochondrial large ribosomal subunit (mt-LSU). Mature yeast 74S mitochondrial ribosomes consist of a small (37S) and a large (54S) subunit. The 37S small subunit contains a 15S ribosomal RNA (15S mt-rRNA) and 34 different proteins. The 54S large subunit contains a 21S rRNA (21S mt-rRNA) and 46 different proteins.

The protein resides in the mitochondrion. Component of the mitochondrial ribosome (mitoribosome), a dedicated translation machinery responsible for the synthesis of mitochondrial genome-encoded proteins, including at least some of the essential transmembrane subunits of the mitochondrial respiratory chain. The mitoribosomes are attached to the mitochondrial inner membrane and translation products are cotranslationally integrated into the membrane. The protein is Large ribosomal subunit protein mL41 (MRPL27) of Saccharomyces cerevisiae (strain ATCC 204508 / S288c) (Baker's yeast).